The chain runs to 335 residues: MRIAVDVMGGDFAPQEIIRGAEAAVREWGFEVILVGNEEAIAKYADSRLCLPVVRAPQVVQMDESPVVAVKRKPDSSVVKAVELVKDGRADAAVSAGHTGATFAASLFRLGRIRGVERPALASVIPNEQGQTVLLDIGANVDCKPGHLLKFGIMGSLYARQVLGVPNPRVGLLSIGEEASKGNEQTLTVFPLFERAPFDFVGNVEGGDLFSGRVDVVVCDGFVGNIALKTGEGVVRTLEKAVKQEVATNWISKVCALPTVYTLRNIRKRFDYTEYGGAPLLGVNGVVVVSHGRSNAKAVKNAIRVAGEAVRTNLVGTIAGGIGDVRENGAETADG.

The protein belongs to the PlsX family. Homodimer. Probably interacts with PlsY.

It localises to the cytoplasm. It carries out the reaction a fatty acyl-[ACP] + phosphate = an acyl phosphate + holo-[ACP]. It functions in the pathway lipid metabolism; phospholipid metabolism. In terms of biological role, catalyzes the reversible formation of acyl-phosphate (acyl-PO(4)) from acyl-[acyl-carrier-protein] (acyl-ACP). This enzyme utilizes acyl-ACP as fatty acyl donor, but not acyl-CoA. This Desulforudis audaxviator (strain MP104C) protein is Phosphate acyltransferase.